A 329-amino-acid polypeptide reads, in one-letter code: DNA-directed RNA polymerase subunit alpha (329 aa).

The tract at residues 1–234 is alpha N-terminal domain (alpha-NTD); that stretch reads MQGSVTEFLK…EQLDAFVELR (234 aa). An alpha C-terminal domain (alpha-CTD) region spans residues 248–329; sequence FDPILLRPVD…WPPASLADDL (82 aa).

This sequence belongs to the RNA polymerase alpha chain family. Homodimer. The RNAP catalytic core consists of 2 alpha, 1 beta, 1 beta' and 1 omega subunit. When a sigma factor is associated with the core the holoenzyme is formed, which can initiate transcription.

It carries out the reaction RNA(n) + a ribonucleoside 5'-triphosphate = RNA(n+1) + diphosphate. DNA-dependent RNA polymerase catalyzes the transcription of DNA into RNA using the four ribonucleoside triphosphates as substrates. The sequence is that of DNA-directed RNA polymerase subunit alpha from Shewanella sp. (strain ANA-3).